We begin with the raw amino-acid sequence, 1358 residues long: DNA-directed RNA polymerase subunit beta (1358 aa).

This sequence belongs to the RNA polymerase beta chain family. As to quaternary structure, the RNAP catalytic core consists of 2 alpha, 1 beta, 1 beta' and 1 omega subunit. When a sigma factor is associated with the core the holoenzyme is formed, which can initiate transcription.

It carries out the reaction RNA(n) + a ribonucleoside 5'-triphosphate = RNA(n+1) + diphosphate. Functionally, DNA-dependent RNA polymerase catalyzes the transcription of DNA into RNA using the four ribonucleoside triphosphates as substrates. The protein is DNA-directed RNA polymerase subunit beta of Methylococcus capsulatus (strain ATCC 33009 / NCIMB 11132 / Bath).